Reading from the N-terminus, the 70-residue chain is Large ribosomal subunit protein eL38 (70 aa).

K4 is covalently cross-linked (Glycyl lysine isopeptide (Lys-Gly) (interchain with G-Cter in SUMO2)). K9 bears the N6-acetyllysine; alternate mark. K9 is covalently cross-linked (Glycyl lysine isopeptide (Lys-Gly) (interchain with G-Cter in SUMO2); alternate). K67 bears the N6-acetyllysine mark.

It belongs to the eukaryotic ribosomal protein eL38 family. Component of the large ribosomal subunit.

It is found in the cytoplasm. Component of the large ribosomal subunit. The ribosome is a large ribonucleoprotein complex responsible for the synthesis of proteins in the cell. The sequence is that of Large ribosomal subunit protein eL38 (RPL38) from Macaca fascicularis (Crab-eating macaque).